The chain runs to 318 residues: NADH-ubiquinone oxidoreductase chain 1 (318 aa).

The next 8 membrane-spanning stretches (helical) occupy residues 2 to 22 (FMIN…FLTL), 68 to 88 (ISMF…MWIP), 100 to 120 (LGVL…LWSG), 147 to 167 (AIIL…TLII), 172 to 192 (VWLI…TLAE), 217 to 237 (AGPF…MNIF), 253 to 273 (ELYT…FLWI), and 294 to 314 (LPLT…LSSI).

This sequence belongs to the complex I subunit 1 family.

It is found in the mitochondrion inner membrane. It catalyses the reaction a ubiquinone + NADH + 5 H(+)(in) = a ubiquinol + NAD(+) + 4 H(+)(out). Its function is as follows. Core subunit of the mitochondrial membrane respiratory chain NADH dehydrogenase (Complex I) that is believed to belong to the minimal assembly required for catalysis. Complex I functions in the transfer of electrons from NADH to the respiratory chain. The immediate electron acceptor for the enzyme is believed to be ubiquinone. This is NADH-ubiquinone oxidoreductase chain 1 (MT-ND1) from Ovis aries (Sheep).